A 367-amino-acid chain; its full sequence is 2-aminoethylphosphonate--pyruvate transaminase (367 aa).

Lys194 is subject to N6-(pyridoxal phosphate)lysine.

This sequence belongs to the class-V pyridoxal-phosphate-dependent aminotransferase family. PhnW subfamily. In terms of assembly, homodimer. Pyridoxal 5'-phosphate serves as cofactor.

It carries out the reaction (2-aminoethyl)phosphonate + pyruvate = phosphonoacetaldehyde + L-alanine. Functionally, involved in phosphonate degradation. In Salmonella dublin (strain CT_02021853), this protein is 2-aminoethylphosphonate--pyruvate transaminase.